Here is a 166-residue protein sequence, read N- to C-terminus: NAD(P)H-quinone oxidoreductase subunit I, chloroplastic (166 aa).

4Fe-4S ferredoxin-type domains lie at 55–84 and 95–124; these read GRIHFEFDKCIACEVCVRVCPIDLPVVDWK and LNYSIDFGICIFCGNCVEYCPTNCLSMTEE. Residues Cys-64, Cys-67, Cys-70, Cys-74, Cys-104, Cys-107, Cys-110, and Cys-114 each coordinate [4Fe-4S] cluster.

This sequence belongs to the complex I 23 kDa subunit family. NDH is composed of at least 16 different subunits, 5 of which are encoded in the nucleus. Requires [4Fe-4S] cluster as cofactor.

The protein localises to the plastid. The protein resides in the chloroplast thylakoid membrane. The catalysed reaction is a plastoquinone + NADH + (n+1) H(+)(in) = a plastoquinol + NAD(+) + n H(+)(out). It catalyses the reaction a plastoquinone + NADPH + (n+1) H(+)(in) = a plastoquinol + NADP(+) + n H(+)(out). Its function is as follows. NDH shuttles electrons from NAD(P)H:plastoquinone, via FMN and iron-sulfur (Fe-S) centers, to quinones in the photosynthetic chain and possibly in a chloroplast respiratory chain. The immediate electron acceptor for the enzyme in this species is believed to be plastoquinone. Couples the redox reaction to proton translocation, and thus conserves the redox energy in a proton gradient. The sequence is that of NAD(P)H-quinone oxidoreductase subunit I, chloroplastic from Oxypappus scaber.